A 291-amino-acid polypeptide reads, in one-letter code: Tyrosine-protein kinase PtkA (291 aa).

Residues 1-79 (MSSPRERRPA…RRASSPGESP (79 aa)) are disordered. Polar residues predominate over residues 23–60 (HQTSRSSPDTTAPTGSGLSNRFVNDNGIVTDTTASGTN). The residue at position 262 (Y262) is a Phosphotyrosine.

This sequence belongs to the HAD-like hydrolase superfamily. CbbY/CbbZ/Gph/YieH family. As to quaternary structure, interacts with PtpA. Autophosphorylated.

It carries out the reaction L-tyrosyl-[protein] + ATP = O-phospho-L-tyrosyl-[protein] + ADP + H(+). Functionally, required for growth within macrophages. Catalyzes the phosphorylation of PtpA on the tyrosine residues at positions 128 and 129, thereby increasing PtpA phosphatase activity and promoting pathogenicity. The polypeptide is Tyrosine-protein kinase PtkA (Mycobacterium bovis (strain ATCC BAA-935 / AF2122/97)).